We begin with the raw amino-acid sequence, 387 residues long: 8-amino-7-oxononanoate synthase (387 aa).

R19 lines the substrate pocket. Residue G106–Y107 coordinates pyridoxal 5'-phosphate. A substrate-binding site is contributed by H131. Residues S177, H205, and T236 each coordinate pyridoxal 5'-phosphate. An N6-(pyridoxal phosphate)lysine modification is found at K239. T353 lines the substrate pocket.

It belongs to the class-II pyridoxal-phosphate-dependent aminotransferase family. BioF subfamily. As to quaternary structure, homodimer. The cofactor is pyridoxal 5'-phosphate.

It catalyses the reaction 6-carboxyhexanoyl-[ACP] + L-alanine + H(+) = (8S)-8-amino-7-oxononanoate + holo-[ACP] + CO2. Its pathway is cofactor biosynthesis; biotin biosynthesis. Catalyzes the decarboxylative condensation of pimeloyl-[acyl-carrier protein] and L-alanine to produce 8-amino-7-oxononanoate (AON), [acyl-carrier protein], and carbon dioxide. This is 8-amino-7-oxononanoate synthase from Nitrosomonas eutropha (strain DSM 101675 / C91 / Nm57).